The primary structure comprises 521 residues: uncharacterized protein (521 aa).

Residues 1–15 (MLSFRNQPGNPSGNL) are compositionally biased toward polar residues. Positions 1 to 20 (MLSFRNQPGNPSGNLTFGGV) are disordered.

This is an uncharacterized protein from Micromonas pusilla (Picoplanktonic green alga).